The chain runs to 49 residues: DNA-directed RNA polymerase subunit Rpo12 (49 aa).

Residues Cys-11, Cys-27, and Cys-30 each coordinate Zn(2+).

It belongs to the archaeal Rpo12/eukaryotic RPC10 RNA polymerase subunit family. In terms of assembly, part of the RNA polymerase complex. Requires Zn(2+) as cofactor.

The protein resides in the cytoplasm. Its subcellular location is the chromosome. The enzyme catalyses RNA(n) + a ribonucleoside 5'-triphosphate = RNA(n+1) + diphosphate. DNA-dependent RNA polymerase (RNAP) catalyzes the transcription of DNA into RNA using the four ribonucleoside triphosphates as substrates. In Thermococcus kodakarensis (strain ATCC BAA-918 / JCM 12380 / KOD1) (Pyrococcus kodakaraensis (strain KOD1)), this protein is DNA-directed RNA polymerase subunit Rpo12.